Reading from the N-terminus, the 310-residue chain is Syndecan-1 (310 aa).

The N-terminal stretch at 1–22 (MRRAALWLWLCALALSLQPALP) is a signal peptide. Residues 23–254 (QIVATNLPPE…GLLDRKEVLG (232 aa)) are Extracellular-facing. Disordered regions lie at residues 27–100 (TNLP…EGPK) and 114–212 (LTAR…QDFT). Acidic residues predominate over residues 32-42 (EDQDGSGDDSD). O-linked (Xyl...) (chondroitin sulfate) serine glycosylation occurs at Ser-37. An N-linked (GlcNAc...) asparagine glycan is attached at Asn-43. Ser-45 and Ser-47 each carry an O-linked (Xyl...) (heparan sulfate) serine glycan. The span at 55 to 75 (ITLSQQTPSTWKDTQLLTAIP) shows a compositional bias: polar residues. Over residues 117 to 127 (REQEATPRPRE) the composition is skewed to basic and acidic residues. The span at 128-151 (TTQLPTTHLASTTTATTAQEPATS) shows a compositional bias: low complexity. A compositionally biased stretch (basic and acidic residues) spans 153 to 164 (PHRDMQPGHHET). 2 O-linked (Xyl...) (chondroitin sulfate) serine glycosylation sites follow: Ser-206 and Ser-216. The helical transmembrane segment at 255-275 (GVIAGGLVGLIFAVCLVGFML) threads the bilayer. At 276 to 310 (YRMKKKDEGSYSLEEPKQANGGAYQKPTKQEEFYA) the chain is on the cytoplasmic side. The disordered stretch occupies residues 284-310 (GSYSLEEPKQANGGAYQKPTKQEEFYA). Position 285 is a phosphoserine (Ser-285).

This sequence belongs to the syndecan proteoglycan family. Interacts with CDCP1. Interacts (via C-terminus) with TIAM1 (via PDZ domain). Interacts with MDK. In terms of processing, shedding is enhanced by a number of factors such as heparanase, thrombin or EGF. Also by stress and wound healing. PMA-mediated shedding is inhibited by TIMP3. As to expression, detected in placenta (at protein level). Detected in fibroblasts (at protein level).

The protein resides in the membrane. It is found in the secreted. The protein localises to the extracellular exosome. Cell surface proteoglycan that contains both heparan sulfate and chondroitin sulfate and that links the cytoskeleton to the interstitial matrix. Regulates exosome biogenesis in concert with SDCBP and PDCD6IP. Able to induce its own expression in dental mesenchymal cells and also in the neighboring dental epithelial cells via an MSX1-mediated pathway. The sequence is that of Syndecan-1 from Homo sapiens (Human).